The primary structure comprises 257 residues: Photosystem I chlorophyll a/b-binding protein 2, chloroplastic (257 aa).

The N-terminal 43 residues, 1–43, are a transit peptide targeting the chloroplast; that stretch reads MASSLCASSAIAAISSPSFLGGKKLRLKKKLTVPAVSRPDASV. Chlorophyll b is bound at residue tryptophan 55. Chlorophyll a-binding residues include phenylalanine 75, serine 81, and glutamate 94. Arginine 99 contacts chlorophyll b. 2 helical membrane passes run 100-120 and 133-153; these read WAMLGAAGIFIPEFLTKIGIL and YFTDKTTLFVVELILIGWAEG. Chlorophyll b-binding residues include glutamate 152 and arginine 155. 6 residues coordinate chlorophyll a: lysine 208, glutamate 209, asparagine 212, arginine 214, glutamine 226, and histidine 241. A helical membrane pass occupies residues 215–235; that stretch reads LAMLAVMGAWFQHIYTGTGPI.

It belongs to the light-harvesting chlorophyll a/b-binding (LHC) protein family. As to quaternary structure, the LHC complex consists of chlorophyll a-b binding proteins. Red-emitting heterodimers with LHCA3 and LHCA5. Binds to carotenoids. Binds at least 14 chlorophylls (8 Chl-a and 6 Chl-b) and carotenoids such as lutein and neoxanthin. serves as cofactor. Post-translationally, photoregulated by reversible phosphorylation of its threonine residues.

It is found in the plastid. The protein resides in the chloroplast thylakoid membrane. Its function is as follows. The light-harvesting complex (LHC) functions as a light receptor, it captures and delivers excitation energy to photosystems with which it is closely associated, here photosystem I. The protein is Photosystem I chlorophyll a/b-binding protein 2, chloroplastic of Arabidopsis thaliana (Mouse-ear cress).